The primary structure comprises 571 residues: Coenzyme A biosynthesis protein 3 (571 aa).

2 disordered regions span residues 1–72 and 100–120; these read MTDE…YKND and INTSMPANTNGQQKRFSPSLP. A compositionally biased stretch (polar residues) spans 8 to 35; it reads SDQNMNGKQGVNLISSLPTTQVPVSILT. Position 42 is a phosphoserine (Ser42). Basic and acidic residues predominate over residues 43 to 59; sequence IHDESNFERSDSHEDQS. Positions 60–72 are enriched in polar residues; sequence KSNSNRRNIYKND. Ser116, Ser121, and Ser124 each carry phosphoserine. 2 disordered regions span residues 140–171 and 209–244; these read ISNKPGKQQQQQEQLQQNQQQEEQQKAQLQEQ and IFKENTTNDGTDIRKHSVSSGTSNSEDEVDSPSMEK. Over residues 146–171 the composition is skewed to low complexity; that stretch reads KQQQQQEQLQQNQQQEEQQKAQLQEQ. Ser264 is modified (phosphoserine). A disordered region spans residues 507 to 571; it reads RDEETGDKEQ…EDEEDVKTEV (65 aa). The segment covering 516-571 has biased composition (acidic residues); that stretch reads QEQEEQEGADNEDDDDEDDEEDEEDEEEEEALNETASDESNDEEDEEDEEDVKTEV.

The protein belongs to the HFCD (homooligomeric flavin containing Cys decarboxylase) superfamily. Component of the phosphopantothenoylcysteine decarboxylase (PPCDC) complex, a heterotrimer composed of CAB3, HAL3 and VHS3.

It is found in the cytoplasm. In terms of biological role, component of the phosphopantothenoylcysteine decarboxylase (PPCDC) involved in the coenzyme A synthesis. This chain is Coenzyme A biosynthesis protein 3 (CAB3), found in Saccharomyces cerevisiae (strain ATCC 204508 / S288c) (Baker's yeast).